A 264-amino-acid polypeptide reads, in one-letter code: Putative hydro-lyase Psyr_0498 (264 aa).

This sequence belongs to the D-glutamate cyclase family.

The chain is Putative hydro-lyase Psyr_0498 from Pseudomonas syringae pv. syringae (strain B728a).